The following is a 473-amino-acid chain: DNA (cytosine-5)-methyltransferase DRM1A (473 aa).

The UBA 1 domain occupies 20 to 61 (SAPSALVAYFLGMGFSREMVFRAIKEIGDTDSEQILELLLTY). The segment covering 84–101 (EEEDEEEDVNWDEDDTVD) has biased composition (acidic residues). The segment at 84–115 (EEEDEEEDVNWDEDDTVDNFDRATYSDGSGDE) is disordered. Residues 120–140 (EMSEKDEKIKSLVSMGFPEDE) enclose the UBA 2 domain. One can recognise an SAM-dependent MTase DRM-type domain in the interval 204-431 (VHRNLPDQAL…DSVKTIMASI (228 aa)).

It belongs to the class I-like SAM-binding methyltransferase superfamily. DRM-methyltransferase family.

The protein resides in the nucleus. The enzyme catalyses a 2'-deoxycytidine in DNA + S-adenosyl-L-methionine = a 5-methyl-2'-deoxycytidine in DNA + S-adenosyl-L-homocysteine + H(+). Its function is as follows. Involved in de novo DNA methylation. Involved in RNA-directed DNA methylation (RdDM). This is DNA (cytosine-5)-methyltransferase DRM1A from Oryza sativa subsp. japonica (Rice).